The sequence spans 268 residues: Putative pyruvate, phosphate dikinase regulatory protein (268 aa).

Residue 147–154 participates in ADP binding; the sequence is GLSRTSKT.

The protein belongs to the pyruvate, phosphate/water dikinase regulatory protein family. PDRP subfamily.

It catalyses the reaction N(tele)-phospho-L-histidyl/L-threonyl-[pyruvate, phosphate dikinase] + ADP = N(tele)-phospho-L-histidyl/O-phospho-L-threonyl-[pyruvate, phosphate dikinase] + AMP + H(+). It carries out the reaction N(tele)-phospho-L-histidyl/O-phospho-L-threonyl-[pyruvate, phosphate dikinase] + phosphate + H(+) = N(tele)-phospho-L-histidyl/L-threonyl-[pyruvate, phosphate dikinase] + diphosphate. Functionally, bifunctional serine/threonine kinase and phosphorylase involved in the regulation of the pyruvate, phosphate dikinase (PPDK) by catalyzing its phosphorylation/dephosphorylation. In Clostridium beijerinckii (strain ATCC 51743 / NCIMB 8052) (Clostridium acetobutylicum), this protein is Putative pyruvate, phosphate dikinase regulatory protein.